A 311-amino-acid chain; its full sequence is 4-hydroxy-tetrahydrodipicolinate synthase (311 aa).

Residue Thr-51 participates in pyruvate binding. Residue Tyr-140 is the Proton donor/acceptor of the active site. Lys-168 acts as the Schiff-base intermediate with substrate in catalysis. Ile-209 provides a ligand contact to pyruvate.

The protein belongs to the DapA family. As to quaternary structure, homotetramer; dimer of dimers.

It localises to the cytoplasm. The enzyme catalyses L-aspartate 4-semialdehyde + pyruvate = (2S,4S)-4-hydroxy-2,3,4,5-tetrahydrodipicolinate + H2O + H(+). It functions in the pathway amino-acid biosynthesis; L-lysine biosynthesis via DAP pathway; (S)-tetrahydrodipicolinate from L-aspartate: step 3/4. Its function is as follows. Catalyzes the condensation of (S)-aspartate-beta-semialdehyde [(S)-ASA] and pyruvate to 4-hydroxy-tetrahydrodipicolinate (HTPA). The protein is 4-hydroxy-tetrahydrodipicolinate synthase of Streptococcus pneumoniae (strain ATCC 700669 / Spain 23F-1).